We begin with the raw amino-acid sequence, 453 residues long: Ribosome biogenesis protein YTM1 (453 aa).

Residues 8–89 form a ubiquitin-like (UBL) domain region; that stretch reads VKLRFFTREQ…ETFLNVEYTR (82 aa). The interval 99 to 453 is sufficient for interaction with ERB1 and association with 66S pre-ribosomes; it reads SFSNEDWVSS…INKGDNIFKS (355 aa). WD repeat units lie at residues 101–139, 141–179, 199–237, 278–318, 320–359, 366–406, and 417–453; these read SNED…EKQY, GHSA…LKQP, GHKA…MTVV, SHTG…CIDT, TTSY…TSKI, GHKN…PMYT, and GVND…IFKS.

The protein belongs to the WD repeat WDR12/YTM1 family. As to quaternary structure, component of the NOP7 complex, composed of ERB1, NOP7 and YTM1. The complex is held together by ERB1, which interacts with NOP7 via its N-terminal domain and with YTM1 via a high-affinity interaction between the seven-bladed beta-propeller domains of the 2 proteins. The NOP7 complex associates with the 66S pre-ribosome. Interacts (via UBL domain) with MDN1 (via VWFA/MIDAS domain).

It localises to the nucleus. The protein localises to the nucleolus. It is found in the nucleoplasm. Component of the NOP7 complex, which is required for maturation of the 25S and 5.8S ribosomal RNAs and formation of the 60S ribosome. This is Ribosome biogenesis protein YTM1 from Vanderwaltozyma polyspora (strain ATCC 22028 / DSM 70294 / BCRC 21397 / CBS 2163 / NBRC 10782 / NRRL Y-8283 / UCD 57-17) (Kluyveromyces polysporus).